The primary structure comprises 1182 residues: MEGPSNPGENLGIISVNPNTCESIELTNQILAKTYTTSWTDMEVYARGNGRICTAYPDVDHPLQDVRGNVSSILERGERSGGFETHPPRDPVTPRERHGNIQTRGAVIAPTPFHVVAAIPQQTRKRRWDILDGMVRRTVSQSTVDPKTVVMCVYRREEEETYDVLDEEEQDDDLLGIPNPTPRRLRISQAGPQQNSWVDTRGRRAYGSQEEQDERTSTDQVSIFSHDETRELSSPLECPIVGCTASFVGPRRWEKAKSHIYGVHSLEEVREIPRGELICKGIVRCETCATLLPTSDRAKQAHRDDCRPYLPRKENIRRKRAAEREATEASAQQGIALRLERQGPYITPRDIEEPTNTTTESWWREKVATKRYLHRKEWPQWLDICRTVLLGYSASSQGERHQRQVMLLDLVRNHLHTRTARREQQQQRGKDNQEEEDRQKKEEKSLRNAWKPCASSVRQGGQPSSSQPKRLNRWSTAPKWLKQSGNCTRRRISMIFPGPPVEQPGVVSVDAEEVAKTIARRLTRGAAPGLDGWTRELLYPLTLDPALKMEIAAVVKDIINADVSMEVGRRLQATSLTVLRKPNGKYRPIGAESVWAKLASHIAISRVMKTAEKKFSGIQFGVGGHIEEAIAKIRKDFATKGSLAMLDGRNAYNAISRRAILEAVYGDSTWSPLWRLVSLLLGTTGEVGFYENGKLCHTWESTRGVRQGMVLGPLLFSIGTLATLRRLQQTFPEAQFTAYLDDVTVAAPPEELKNVCAATAEAMEALGIVNNADKTEVLELTGDTGFGTAVKRVREFLERTWPDPMSEEIREGVEKKAMETDRLFKAIVELPLYNRTRWRILAMSAMPRITFLLRNHDMQHTHRVASWFDERTTQVMEHILGQPMTERARNIAALPVSMGGCGIRRMAQVAEYAHQCAGEKGLQQRKTEEADQRQQDDLYATLGGADRQVFTANTAAGAGRPLTDAQVRLDDATFGVYLRERYCRVLPEGVKCLCGEDASNHHIHTGTKVHNKPRQMRHDIINSVFANGLRLCGFQCATEPRLNEVSKRRPDILIAGLDTYAVTDITVTYPGRVTVGNTAQGQRSVAAADPMKAALVAFQEKERKYSYWAIQNGLAFAPFVMLTNGAIFGKSRDWLRRVLRGQDHRLTVTTAFDGITADVVAAVLRGNVHVYSAAQARGETLR.

Disordered stretches follow at residues 77–97 (GERS…PRER), 163–220 (DVLD…STDQ), 317–339 (RRKR…ALRL), and 418–478 (RTAR…STAP). Residues 163 to 174 (DVLDEEEQDDDL) are compositionally biased toward acidic residues. The segment covering 420-446 (ARREQQQQRGKDNQEEEDRQKKEEKSL) has biased composition (basic and acidic residues). Polar residues predominate over residues 456–475 (SVRQGGQPSSSQPKRLNRWS). The Reverse transcriptase domain occupies 560–790 (NADVSMEVGR…TGDTGFGTAV (231 aa)).

It catalyses the reaction DNA(n) + a 2'-deoxyribonucleoside 5'-triphosphate = DNA(n+1) + diphosphate. In Trypanosoma brucei gambiense, this protein is Retrotransposable element SLACS 132 kDa protein.